The sequence spans 96 residues: MDNGIKYAVFTEKSLRLLGKNQYTFNVESGFTKTEIKHWVELFFGVKVVAVNSHRLPGKGRRMGPILGHTMHYRRMIITLQLGILFHFYPLNSRVF.

Belongs to the universal ribosomal protein uL23 family. In terms of assembly, part of the 50S ribosomal subunit.

Its subcellular location is the plastid. It localises to the chloroplast. Functionally, binds to 23S rRNA. The sequence is that of Large ribosomal subunit protein uL23cz (rpl23-A) from Sorghum bicolor (Sorghum).